Reading from the N-terminus, the 431-residue chain is Light-independent protochlorophyllide reductase subunit N (431 aa).

3 residues coordinate [4Fe-4S] cluster: C29, C54, and C114.

It belongs to the BchN/ChlN family. Protochlorophyllide reductase is composed of three subunits; ChlL, ChlN and ChlB. Forms a heterotetramer of two ChlB and two ChlN subunits. The cofactor is [4Fe-4S] cluster.

It is found in the plastid. The protein resides in the chloroplast. It carries out the reaction chlorophyllide a + oxidized 2[4Fe-4S]-[ferredoxin] + 2 ADP + 2 phosphate = protochlorophyllide a + reduced 2[4Fe-4S]-[ferredoxin] + 2 ATP + 2 H2O. The protein operates within porphyrin-containing compound metabolism; chlorophyll biosynthesis (light-independent). In terms of biological role, component of the dark-operative protochlorophyllide reductase (DPOR) that uses Mg-ATP and reduced ferredoxin to reduce ring D of protochlorophyllide (Pchlide) to form chlorophyllide a (Chlide). This reaction is light-independent. The NB-protein (ChlN-ChlB) is the catalytic component of the complex. The protein is Light-independent protochlorophyllide reductase subunit N of Nephroselmis olivacea (Green alga).